The following is a 127-amino-acid chain: UPF0166 protein PYRAB06660 (127 aa).

It belongs to the UPF0166 family.

This Pyrococcus abyssi (strain GE5 / Orsay) protein is UPF0166 protein PYRAB06660.